A 29-amino-acid polypeptide reads, in one-letter code: Cysteine-rich venom protein 25-A (29 aa).

Belongs to the CRISP family. Post-translationally, contains 8 disulfide bonds. As to expression, expressed by the venom gland.

It is found in the secreted. This chain is Cysteine-rich venom protein 25-A, found in Naja haje haje (Egyptian cobra).